Here is a 497-residue protein sequence, read N- to C-terminus: MWRPSENKVYLPPTPVSKVVSTDEYVTRTSIYYHASSSRLLAVGHPYFKVQKTNNKQSIPKVSGYQYRVFRVQLPDPNKFGLPDPSLYNPETQRLVWACTGVEVGRGQPLGLGLSGHPLLNKLDDTENAPKYVGAGADNRENVSMDYKQTQLCILGCTPPIGEHWAKGNLCTPNTLAAGDCPPLELVNSYIQDGDMVDIGFGAMDFKTLQTSKSEVPLDVATSICKYPDYLKMAAEAYGDSLFFYLRREQMFVRHMLNRAGTMGEPVPNDLYIKKSSGNLDSSIYAATPSGSMVTSEYQIFNKPYWLQRAQGQNNGICWGNQVFLTVVDTTRSTNLTLCATASTQDSFNNSDFREYIRHVEEYDLQFIFQLCTITLTADVMAYIHGMNPTILEDWNFGITPPATSSLEDTYRFVQSQAIACQKNNAPAKEKEDPYSKFNFWTVDLKERFSSDLDQFPLGRKFLLQAGLRARPRLRPVKRAAPSSSKGTARKRAKTKR.

Residues 473 to 497 (RLRPVKRAAPSSSKGTARKRAKTKR) are disordered. Residues 488–497 (TARKRAKTKR) show a composition bias toward basic residues.

It belongs to the papillomaviridae L1 protein family. In terms of assembly, self-assembles into homopentamers. The capsid has an icosahedral symmetry and consists of 72 capsomers, with each capsomer being a pentamer of L1. Interacts with the minor capsid protein L2; this interaction is necessary for viral genome encapsidation. Interacts with protein E2; this interaction enhances E2-dependent replication and transcription activation.

It is found in the virion. The protein resides in the host nucleus. Forms an icosahedral capsid with a T=7 symmetry and a 50 nm diameter. The capsid is composed of 72 pentamers linked to each other by disulfide bonds and associated with L2 proteins. Binds to heparan sulfate proteoglycans on cell surface of basal layer keratinocytes to provide initial virion attachment. This binding mediates a conformational change in the virus capsid that facilitates efficient infection. The virion enters the host cell via endocytosis. During virus trafficking, L1 protein dissociates from the viral DNA and the genomic DNA is released to the host nucleus. The virion assembly takes place within the cell nucleus. Encapsulates the genomic DNA together with protein L2. In Human papillomavirus type 54, this protein is Major capsid protein L1.